Here is a 2656-residue protein sequence, read N- to C-terminus: 1-phosphatidylinositol 3-phosphate 5-kinase (2656 aa).

The interval 24–159 (FGTDDSQKDF…NSTNNDTSSN (136 aa)) is disordered. Low complexity-rich tracts occupy residues 59–107 (NNNN…NNNN) and 124–159 (SNTTNTNTNITTNTNITTNTNTNTNTNSTNNDTSSN). The FYVE-type zinc finger occupies 198–255 (DHSSAVCYECSEEFTTFKRRHHCRLCGQIFCWKCSQKTLTDGKGERVRVCNFCYRRYM). Zn(2+) is bound by residues Cys-204, Cys-207, Cys-220, Cys-223, Cys-228, Cys-231, Cys-247, and Cys-250. Residues 304 to 331 (NVSLGNSGDNSSFVQSPNNNFSQSPTFS) are compositionally biased toward polar residues. Disordered stretches follow at residues 304–383 (NVSL…NNQQ), 465–495 (DHHQQQQQSNSHGSLSATPSNTPSGLISPIV), 517–570 (DNLD…SSSS), 618–657 (NNNDNGNDDNNNNNNDNNNNTTIEVDPRHSMPSKTSNTSF), 670–823 (TIGR…QQQP), 1115–1150 (SNSIQLQQQQNSNSPASLQNSTTTTNNNNNNNNNST), 1633–1659 (RSKRNVQQQQQQQQHQQSQQPQPQILI), 1710–1844 (VNNN…SSTP), 2031–2127 (QQQQ…SISP), 2179–2208 (NQQQQQQQQPSPIIIDEKDDRNTEKSSIIE), 2246–2304 (QQGD…SSNS), and 2617–2656 (NNNNNYNYNNFNNNNFNNNNNISNNGNGNINQRQVQQINK). Positions 332–355 (QQQQQQQQQQQQQQQQQQQQQQQQ) are enriched in low complexity. Polar residues-rich tracts occupy residues 356 to 371 (TTGVMSGLNPFSNSTL), 473 to 489 (SNSHGSLSATPSNTPSG), and 542 to 557 (SHSSANDLGTSNTVST). 5 stretches are compositionally biased toward low complexity: residues 558 to 570 (GESNSESKLSSSS), 618 to 637 (NNNDNGNDDNNNNNNDNNNN), 674 to 730 (NNNN…NLPN), 743 to 757 (QQQQQQQQQQQQPQP), and 811 to 823 (PSSSSNNQQQQQP). 2 stretches are compositionally biased toward low complexity: residues 1639–1656 (QQQQQQQQHQQSQQPQPQ) and 1710–1746 (VNNNNNNNNNNNNNNNNNNNNNNNNNNNNNNNNNNNN). Coiled-coil stretches lie at residues 1741-1823 (NNNN…NNNN) and 2019-2061 (KRIS…QQEQ). Residues 1750–1798 (NKSENENENKNENKNENENENENKNENKNENENENKKENENQLEIKNEN) show a composition bias toward basic and acidic residues. Low complexity-rich tracts occupy residues 1807–1833 (NNNNNNNNNNNNNNNNNNNNNNNIDNN), 2031–2061 (QQQQQQDSQDLESSSQQQQQQQQQQQEQQEQ), 2078–2107 (SPSSLLKISSSSLPKDNNNSSENKPNSETN), and 2118–2127 (LSGSPISISP). The span at 2193-2202 (IDEKDDRNTE) shows a compositional bias: basic and acidic residues. Composition is skewed to low complexity over residues 2252–2283 (NNNNNNNNNNNNNNNNNNNNNNNNNNNTNNNN) and 2618–2647 (NNNNYNYNNFNNNNFNNNNNISNNGNGNIN). A PIPK domain is found at 2275 to 2596 (NNNNTNNNNE…RFRDAMWLYF (322 aa)).

The protein resides in the endosome membrane. It is found in the early endosome membrane. Its subcellular location is the cytoplasmic vesicle. The protein localises to the phagosome membrane. It localises to the late endosome membrane. The catalysed reaction is a 1,2-diacyl-sn-glycero-3-phospho-(1D-myo-inositol-3-phosphate) + ATP = a 1,2-diacyl-sn-glycero-3-phospho-(1D-myo-inositol-3,5-bisphosphate) + ADP + H(+). It catalyses the reaction a 1,2-diacyl-sn-glycero-3-phospho-(1D-myo-inositol) + ATP = a 1,2-diacyl-sn-glycero-3-phospho-(1D-myo-inositol-5-phosphate) + ADP + H(+). The enzyme catalyses L-seryl-[protein] + ATP = O-phospho-L-seryl-[protein] + ADP + H(+). Functionally, dual specificity kinase part of the PI(3,5)P2 regulatory complex which regulates both the synthesis and turnover of phosphatidylinositol 3,5-bisphosphate (PtdIns(3,5)P2). Catalyzes the phosphorylation of phosphatidylinositol 3-phosphate on the fifth hydroxyl of the myo-inositol ring, to form phosphatidylinositol 3,5-bisphosphate. In Dictyostelium discoideum (Social amoeba), this protein is 1-phosphatidylinositol 3-phosphate 5-kinase (pip5k3).